A 228-amino-acid chain; its full sequence is uncharacterized protein (228 aa).

21–28 is a binding site for ATP; the sequence is GMIALGKT.

This is an uncharacterized protein from Mycoplasma genitalium (strain ATCC 33530 / DSM 19775 / NCTC 10195 / G37) (Mycoplasmoides genitalium).